Here is a 98-residue protein sequence, read N- to C-terminus: Small ribosomal subunit protein bS20 (98 aa).

This sequence belongs to the bacterial ribosomal protein bS20 family.

Functionally, binds directly to 16S ribosomal RNA. The sequence is that of Small ribosomal subunit protein bS20 from Kosmotoga olearia (strain ATCC BAA-1733 / DSM 21960 / TBF 19.5.1).